Reading from the N-terminus, the 296-residue chain is HVA22-like protein i (296 aa).

Residues Ser-146–Arg-296 form a disordered region. Low complexity predominate over residues Val-180–Asn-193. Over residues Ala-223–Val-233 the composition is skewed to polar residues. A compositionally biased stretch (acidic residues) spans Gln-251–Ser-261. The span at Gly-270 to Arg-281 shows a compositional bias: basic and acidic residues.

This sequence belongs to the DP1 family.

This is HVA22-like protein i (HVA22I) from Arabidopsis thaliana (Mouse-ear cress).